The chain runs to 495 residues: Maintenance of mitochondrial morphology protein 1 (495 aa).

Residues M1 to G22 are Lumenal-facing. Residues F23 to F43 traverse the membrane as a helical segment. Residues G44–N495 are Cytoplasmic-facing. Disordered stretches follow at residues Y63–S94, A269–S320, W382–G428, and G440–N495. 2 stretches are compositionally biased toward polar residues: residues S65–Q74 and S82–S94. In terms of domain architecture, SMP-LTD spans Q128–P379. Over residues T271–S289 the composition is skewed to pro residues. The span at F418 to G428 shows a compositional bias: basic and acidic residues. Residues R458–G469 show a composition bias toward polar residues.

This sequence belongs to the MMM1 family. In terms of assembly, homodimer. Component of the ER-mitochondria encounter structure (ERMES) or MDM complex, composed of mmm1, mdm10, mdm12 and mdm34. An MMM1 homodimer associates with one molecule of mdm12 on each side in a pairwise head-to-tail manner, and the SMP-LTD domains of mmm1 and mdm12 generate a continuous hydrophobic tunnel for phospholipid trafficking.

The protein resides in the endoplasmic reticulum membrane. In terms of biological role, component of the ERMES/MDM complex, which serves as a molecular tether to connect the endoplasmic reticulum (ER) and mitochondria. Components of this complex are involved in the control of mitochondrial shape and protein biogenesis, and function in nonvesicular lipid trafficking between the ER and mitochondria. The mdm12-mmm1 subcomplex functions in the major beta-barrel assembly pathway that is responsible for biogenesis of all outer membrane beta-barrel proteins, and acts in a late step after the SAM complex. The mdm10-mdm12-mmm1 subcomplex further acts in the TOM40-specific pathway after the action of the mdm12-mmm1 complex. Essential for establishing and maintaining the structure of mitochondria and maintenance of mtDNA nucleoids. The chain is Maintenance of mitochondrial morphology protein 1 from Penicillium rubens (strain ATCC 28089 / DSM 1075 / NRRL 1951 / Wisconsin 54-1255) (Penicillium chrysogenum).